Reading from the N-terminus, the 556-residue chain is Phospholipase D (556 aa).

The signal sequence occupies residues 1 to 47; it reads MTSDQRPARLPTHKGKLLAPHRLHRLIPVSVALTTVCAALPSSTAYA. Residues 210–237 enclose the PLD phosphodiesterase 1 domain; sequence SLSWNHSKLLVVDGKTAITGGINGWKDD. A disordered region spans residues 326–360; it reads SDPSSGYHPDLPTAPDTKCTVGLHDNTNADRDYDT. Residues 484-511 enclose the PLD phosphodiesterase 2 domain; that stretch reads KPYALHHKLVSVDDSAFYIGSKNLYPAW.

This sequence belongs to the phospholipase D family. Probably has at least 1 disulfide bond.

The protein resides in the secreted. The catalysed reaction is a 1,2-diacyl-sn-glycero-3-phosphocholine + H2O = a 1,2-diacyl-sn-glycero-3-phosphate + choline + H(+). Inhibited by mercaptoethanol and dithiothreitol. A reversible phospholipase active on phosphatidylcholine (PC) and phosphatidylethanolamine. Lysophosphatidylcholine and egg sphingomyelin are hydrolyzed about 50 times and 100 times more slowly than PC, respectively. During the transphosphatidylation reaction straight-chain hydroxy compounds, such as triethyleneglycol and triethyleneglycol monomethyl ether, were phosphatidylated in good yield, as were monosaccharides. Disaccharides and sugar alcohol reacted slowly, while N-acetyl-D-galactosamine, D-galactosamine and D-galacturonic acid were not phosphatidylated. The protein is Phospholipase D of Streptomyces antibioticus.